A 166-amino-acid polypeptide reads, in one-letter code: Large ribosomal subunit protein uL10 (166 aa).

The protein belongs to the universal ribosomal protein uL10 family. Part of the ribosomal stalk of the 50S ribosomal subunit. The N-terminus interacts with L11 and the large rRNA to form the base of the stalk. The C-terminus forms an elongated spine to which L12 dimers bind in a sequential fashion forming a multimeric L10(L12)X complex.

Its function is as follows. Forms part of the ribosomal stalk, playing a central role in the interaction of the ribosome with GTP-bound translation factors. The protein is Large ribosomal subunit protein uL10 of Streptococcus pneumoniae (strain 70585).